Here is a 376-residue protein sequence, read N- to C-terminus: tRNA-specific 2-thiouridylase MnmA (376 aa).

ATP contacts are provided by residues 17–24 and Met-43; that span reads GMSGGVDS. Residues 103–105 form an interaction with target base in tRNA region; that stretch reads NPD. Residue Cys-108 is the Nucleophile of the active site. Residues Cys-108 and Cys-205 are joined by a disulfide bond. Position 132 (Gly-132) interacts with ATP. The interval 155–157 is interaction with tRNA; the sequence is KDQ. The active-site Cysteine persulfide intermediate is Cys-205. The interaction with tRNA stretch occupies residues 315–316; sequence RY.

Belongs to the MnmA/TRMU family.

It localises to the cytoplasm. The catalysed reaction is S-sulfanyl-L-cysteinyl-[protein] + uridine(34) in tRNA + AH2 + ATP = 2-thiouridine(34) in tRNA + L-cysteinyl-[protein] + A + AMP + diphosphate + H(+). In terms of biological role, catalyzes the 2-thiolation of uridine at the wobble position (U34) of tRNA, leading to the formation of s(2)U34. The sequence is that of tRNA-specific 2-thiouridylase MnmA from Dichelobacter nodosus (strain VCS1703A).